Here is a 276-residue protein sequence, read N- to C-terminus: Acyl-[acyl-carrier-protein]--UDP-N-acetylglucosamine O-acyltransferase (276 aa).

The protein belongs to the transferase hexapeptide repeat family. LpxA subfamily. As to quaternary structure, homotrimer.

It is found in the cytoplasm. The catalysed reaction is a (3R)-hydroxyacyl-[ACP] + UDP-N-acetyl-alpha-D-glucosamine = a UDP-3-O-[(3R)-3-hydroxyacyl]-N-acetyl-alpha-D-glucosamine + holo-[ACP]. It functions in the pathway glycolipid biosynthesis; lipid IV(A) biosynthesis; lipid IV(A) from (3R)-3-hydroxytetradecanoyl-[acyl-carrier-protein] and UDP-N-acetyl-alpha-D-glucosamine: step 1/6. Involved in the biosynthesis of lipid A, a phosphorylated glycolipid that anchors the lipopolysaccharide to the outer membrane of the cell. The chain is Acyl-[acyl-carrier-protein]--UDP-N-acetylglucosamine O-acyltransferase from Rippkaea orientalis (strain PCC 8801 / RF-1) (Cyanothece sp. (strain PCC 8801)).